The following is a 408-amino-acid chain: GPI transamidase component GAB1 homolog (408 aa).

Transmembrane regions (helical) follow at residues 9–29 (LLGL…TWIA), 66–86 (VFYQ…LGGI), 88–108 (VTRF…YLIA), 125–145 (PLWI…GIAC), 149–169 (MILN…SYAI), 207–227 (IFVV…FFLN), 266–286 (FFLF…SIRL), 303–323 (LFKA…LPIF), 339–359 (AIVF…TLGC), and 370–390 (LILA…LLLV). Positions 247-267 (PNLGLWWYFFTEMFNEFRTFF) are may be involved in recognition of long-chain fatty acids in GPI.

The protein belongs to the PIGU family. In terms of assembly, forms a complex with PIG-S homolog, PIG-T homolog and GPI8.

Its subcellular location is the endoplasmic reticulum membrane. The protein operates within glycolipid biosynthesis; glycosylphosphatidylinositol-anchor biosynthesis. In terms of biological role, component of the GPI transamidase complex. May be involved in the recognition of either the GPI attachment signal or the lipid portion of GPI. This Schizosaccharomyces pombe (strain 972 / ATCC 24843) (Fission yeast) protein is GPI transamidase component GAB1 homolog.